We begin with the raw amino-acid sequence, 798 residues long: Suppressor of spindle checkpoint defect 1 (798 aa).

The stretch at 339–359 (ESIQQSQVNVDDMCNRIANME) forms a coiled coil.

Belongs to the APC5 family. As to quaternary structure, the APC/C complex is probably composed of at least 12 subunits: apc-2, apc-10, apc-11, cdc-26, emb-1, emb-27, emb-30, mat-1, mat-2, mat-3, such-1 and gfi-3. As to expression, expressed in head neurons, vulval precursor cells and in mature sperm stored in the spermatheca.

It participates in protein modification; protein ubiquitination. Functionally, probable component of the anaphase promoting complex/cyclosome (APC/C), a cell cycle-regulated E3 ubiquitin ligase that controls progression through mitosis and the G1 phase of the cell cycle. The APC/C complex acts by mediating ubiquitination and subsequent degradation of target proteins. Required for the metaphase to anaphase transition in meiosis. Plays a role in the segregation of DNA and centrioles during meiosis in male germ cells. This is Suppressor of spindle checkpoint defect 1 from Caenorhabditis elegans.